We begin with the raw amino-acid sequence, 305 residues long: PI-PLC X domain-containing protein 2 (305 aa).

The 174-residue stretch at His-42 to Cys-215 folds into the PI-PLC X-box domain. Catalysis depends on residues His-57 and His-132.

As to expression, widely expressed.

It localises to the nucleus. It catalyses the reaction a 1,2-diacyl-sn-glycero-3-phospho-(1D-myo-inositol) + H2O = 1D-myo-inositol 1-phosphate + a 1,2-diacyl-sn-glycerol + H(+). Functionally, catalyzes the hydrolysis of inositol from phosphatidylinositol (1,2-diacyl-sn-glycero-3-phospho-(1D-myo-inositol), PI). Could also hydrolyze various multi-phosphorylated derivatives of PI, such as phosphatidylinositol-4,5 bisphosphate (PIP2), releasing inositol-1,4,5-trisphosphate (IP3) and the protein kinase C activator diacylglycerol (DAG), therefore mediating cell signaling. This chain is PI-PLC X domain-containing protein 2 (PLCXD2), found in Homo sapiens (Human).